Reading from the N-terminus, the 346-residue chain is Phosphoribosylformylglycinamidine cyclo-ligase (346 aa).

This sequence belongs to the AIR synthase family.

Its subcellular location is the cytoplasm. The enzyme catalyses 2-formamido-N(1)-(5-O-phospho-beta-D-ribosyl)acetamidine + ATP = 5-amino-1-(5-phospho-beta-D-ribosyl)imidazole + ADP + phosphate + H(+). The protein operates within purine metabolism; IMP biosynthesis via de novo pathway; 5-amino-1-(5-phospho-D-ribosyl)imidazole from N(2)-formyl-N(1)-(5-phospho-D-ribosyl)glycinamide: step 2/2. The polypeptide is Phosphoribosylformylglycinamidine cyclo-ligase (Shewanella halifaxensis (strain HAW-EB4)).